Consider the following 585-residue polypeptide: Proline--tRNA ligase (585 aa).

This sequence belongs to the class-II aminoacyl-tRNA synthetase family. ProS type 1 subfamily. As to quaternary structure, homodimer.

The protein localises to the cytoplasm. It carries out the reaction tRNA(Pro) + L-proline + ATP = L-prolyl-tRNA(Pro) + AMP + diphosphate. Functionally, catalyzes the attachment of proline to tRNA(Pro) in a two-step reaction: proline is first activated by ATP to form Pro-AMP and then transferred to the acceptor end of tRNA(Pro). As ProRS can inadvertently accommodate and process non-cognate amino acids such as alanine and cysteine, to avoid such errors it has two additional distinct editing activities against alanine. One activity is designated as 'pretransfer' editing and involves the tRNA(Pro)-independent hydrolysis of activated Ala-AMP. The other activity is designated 'posttransfer' editing and involves deacylation of mischarged Ala-tRNA(Pro). The misacylated Cys-tRNA(Pro) is not edited by ProRS. The polypeptide is Proline--tRNA ligase (Acidobacterium capsulatum (strain ATCC 51196 / DSM 11244 / BCRC 80197 / JCM 7670 / NBRC 15755 / NCIMB 13165 / 161)).